Here is a 493-residue protein sequence, read N- to C-terminus: Cytochrome P450 2E1 (493 aa).

A substrate-binding site is contributed by 298 to 303; it reads FAGTET. C437 provides a ligand contact to heme.

Belongs to the cytochrome P450 family. As to quaternary structure, interacts with chaperones HSP70 and HSP90; this interaction is required for initial targeting to mitochondria. The cofactor is heme.

It is found in the endoplasmic reticulum membrane. It localises to the microsome membrane. Its subcellular location is the mitochondrion inner membrane. The catalysed reaction is an organic molecule + reduced [NADPH--hemoprotein reductase] + O2 = an alcohol + oxidized [NADPH--hemoprotein reductase] + H2O + H(+). It carries out the reaction (5Z,8Z,11Z)-eicosatrienoate + reduced [NADPH--hemoprotein reductase] + O2 = 19-hydroxy-(5Z,8Z,11Z)-eicosatrienoate + oxidized [NADPH--hemoprotein reductase] + H2O + H(+). It catalyses the reaction (5Z,8Z,11Z,14Z,17Z)-eicosapentaenoate + reduced [NADPH--hemoprotein reductase] + O2 = 19-hydroxy-(5Z,8Z,11Z,14Z,17Z)-eicosapentaenoate + oxidized [NADPH--hemoprotein reductase] + H2O + H(+). The enzyme catalyses (4Z,7Z,10Z,13Z,16Z,19Z)-docosahexaenoate + reduced [NADPH--hemoprotein reductase] + O2 = 21-hydroxy-(4Z,7Z,10Z,13Z,16Z,19Z)-docosahexaenoate + oxidized [NADPH--hemoprotein reductase] + H2O + H(+). The catalysed reaction is dodecanoate + reduced [NADPH--hemoprotein reductase] + O2 = 11-hydroxydodecanoate + oxidized [NADPH--hemoprotein reductase] + H2O + H(+). It carries out the reaction tetradecanoate + reduced [NADPH--hemoprotein reductase] + O2 = 13-hydroxytetradecanoate + oxidized [NADPH--hemoprotein reductase] + H2O + H(+). It catalyses the reaction 4-nitrophenol + NADPH + O2 + H(+) = 4-nitrocatechol + NADP(+) + H2O. Its pathway is lipid metabolism; fatty acid metabolism. Its activity is regulated as follows. The omega-1 hydroxylase activity is stimulated by cytochrome b5. In terms of biological role, a cytochrome P450 monooxygenase involved in the metabolism of fatty acids. Mechanistically, uses molecular oxygen inserting one oxygen atom into a substrate, and reducing the second into a water molecule, with two electrons provided by NADPH via cytochrome P450 reductase (NADPH--hemoprotein reductase). Catalyzes the hydroxylation of carbon-hydrogen bonds. Hydroxylates fatty acids specifically at the omega-1 position displaying the highest catalytic activity for saturated fatty acids. May be involved in the oxidative metabolism of xenobiotics. The sequence is that of Cytochrome P450 2E1 (CYP2E1) from Oryctolagus cuniculus (Rabbit).